The primary structure comprises 107 residues: Putative protein RFPL3S (107 aa).

As to expression, strongly expressed in the testis and weakly in brain, placenta and pancreas.

The polypeptide is Putative protein RFPL3S (RFPL3S) (Homo sapiens (Human)).